Here is a 388-residue protein sequence, read N- to C-terminus: Probable peptidoglycan glycosyltransferase FtsW (388 aa).

11 helical membrane passes run 16 to 36 (LVLI…SSSV), 54 to 74 (VFAL…PSQS), 82 to 102 (WFLL…EIGG), 109 to 129 (LVVM…LFLA), 144 to 164 (TAVI…LLQP), 167 to 187 (GTTV…GAPF), 189 to 209 (YFVI…INSP), 233 to 253 (SQAL…GASV), 277 to 297 (WLGV…MFAV), 310 to 330 (ALVV…NVGV), and 342 to 362 (LPFV…IGLV).

This sequence belongs to the SEDS family. FtsW subfamily.

It is found in the cell inner membrane. It catalyses the reaction [GlcNAc-(1-&gt;4)-Mur2Ac(oyl-L-Ala-gamma-D-Glu-L-Lys-D-Ala-D-Ala)](n)-di-trans,octa-cis-undecaprenyl diphosphate + beta-D-GlcNAc-(1-&gt;4)-Mur2Ac(oyl-L-Ala-gamma-D-Glu-L-Lys-D-Ala-D-Ala)-di-trans,octa-cis-undecaprenyl diphosphate = [GlcNAc-(1-&gt;4)-Mur2Ac(oyl-L-Ala-gamma-D-Glu-L-Lys-D-Ala-D-Ala)](n+1)-di-trans,octa-cis-undecaprenyl diphosphate + di-trans,octa-cis-undecaprenyl diphosphate + H(+). It functions in the pathway cell wall biogenesis; peptidoglycan biosynthesis. Its function is as follows. Peptidoglycan polymerase that is essential for cell division. This Thiomicrospira cyclica (strain DSM 14477 / JCM 11371 / ALM1) (Thioalkalimicrobium cyclicum) protein is Probable peptidoglycan glycosyltransferase FtsW.